The primary structure comprises 405 residues: Argininosuccinate synthase (405 aa).

Residues 10–18 and Ala-37 each bind ATP; that span reads AFSGGLDTS. Residues Tyr-90 and Ser-95 each contribute to the L-citrulline site. Residue Gly-120 coordinates ATP. The L-aspartate site is built by Thr-122, Asn-126, and Asp-127. Asn-126 provides a ligand contact to L-citrulline. L-citrulline-binding residues include Arg-130, Ser-181, Ser-190, Glu-266, and Tyr-278.

The protein belongs to the argininosuccinate synthase family. Type 1 subfamily. In terms of assembly, homotetramer.

It localises to the cytoplasm. It catalyses the reaction L-citrulline + L-aspartate + ATP = 2-(N(omega)-L-arginino)succinate + AMP + diphosphate + H(+). It functions in the pathway amino-acid biosynthesis; L-arginine biosynthesis; L-arginine from L-ornithine and carbamoyl phosphate: step 2/3. The protein is Argininosuccinate synthase of Rhizorhabdus wittichii (strain DSM 6014 / CCUG 31198 / JCM 15750 / NBRC 105917 / EY 4224 / RW1) (Sphingomonas wittichii).